The following is a 500-amino-acid chain: MEFTIKTGTPEKLKTGSVVVGVFADGQLGDAAAALDKASKGKFAAILGRGDLEDKAGSLLAIHDLPGSACERVLAVSLGKRDEFGDKAWRDALVAIGKALASGAASDVAVCLTDTPVPGRDIDWVLQQLVRAIADGAYRFDATKSKDKGKDSKRRGAGKVVLLTREITASMEAAIQRGQAIAEGMALAKDLGNLPGNFCTPSYLADTAVALGKQYKLKVEVLDRDDMEKLGMGSLLSVARGSHQPPRFIVMHYKGGKSKDKPVVLVGKGITFDSGGISLKPGAEMDEMKFDMCGAASVLGTFKAIARMALPINVVGLIPTTENMPGGGATKPGDVVTSMSGQTIEILNTDAEGRLILCDALTYAERFKPACVVDIATLTGACVVALGKIPSGLLANDDALARELLDCGTVSGDRAWQLPLWDEYQELLKSNFADMGNIGGRFAGTITAACFLARFTKAYKWAHLDIAGTAWVSGDAKGATGRPVPLLAEFLIARSQGAPG.

Mn(2+) contacts are provided by K268 and D273. K280 is a catalytic residue. Positions 291, 350, and 352 each coordinate Mn(2+). Residue R354 is part of the active site.

Belongs to the peptidase M17 family. Requires Mn(2+) as cofactor.

The protein resides in the cytoplasm. The enzyme catalyses Release of an N-terminal amino acid, Xaa-|-Yaa-, in which Xaa is preferably Leu, but may be other amino acids including Pro although not Arg or Lys, and Yaa may be Pro. Amino acid amides and methyl esters are also readily hydrolyzed, but rates on arylamides are exceedingly low.. It carries out the reaction Release of an N-terminal amino acid, preferentially leucine, but not glutamic or aspartic acids.. Its function is as follows. Presumably involved in the processing and regular turnover of intracellular proteins. Catalyzes the removal of unsubstituted N-terminal amino acids from various peptides. The sequence is that of Probable cytosol aminopeptidase from Aromatoleum aromaticum (strain DSM 19018 / LMG 30748 / EbN1) (Azoarcus sp. (strain EbN1)).